The primary structure comprises 156 residues: S-ribosylhomocysteine lyase (156 aa).

Residues His-54, His-58, and Cys-123 each coordinate Fe cation.

It belongs to the LuxS family. Homodimer. Fe cation serves as cofactor.

It catalyses the reaction S-(5-deoxy-D-ribos-5-yl)-L-homocysteine = (S)-4,5-dihydroxypentane-2,3-dione + L-homocysteine. In terms of biological role, involved in the synthesis of autoinducer 2 (AI-2) which is secreted by bacteria and is used to communicate both the cell density and the metabolic potential of the environment. The regulation of gene expression in response to changes in cell density is called quorum sensing. Catalyzes the transformation of S-ribosylhomocysteine (RHC) to homocysteine (HC) and 4,5-dihydroxy-2,3-pentadione (DPD). This chain is S-ribosylhomocysteine lyase, found in Ligilactobacillus salivarius (strain UCC118) (Lactobacillus salivarius).